A 123-amino-acid polypeptide reads, in one-letter code: Fluoride-specific ion channel FluC 2 (123 aa).

The next 3 membrane-spanning stretches (helical) occupy residues 30–50 (FPLP…FVAG), 68–88 (VGFI…VLLL), and 93–113 (WPLA…AVWV). Residues Gly-72 and Thr-75 each coordinate Na(+).

Belongs to the fluoride channel Fluc/FEX (TC 1.A.43) family.

The protein resides in the cell membrane. The catalysed reaction is fluoride(in) = fluoride(out). Its activity is regulated as follows. Na(+) is not transported, but it plays an essential structural role and its presence is essential for fluoride channel function. Fluoride-specific ion channel. Important for reducing fluoride concentration in the cell, thus reducing its toxicity. This is Fluoride-specific ion channel FluC 2 from Symbiobacterium thermophilum (strain DSM 24528 / JCM 14929 / IAM 14863 / T).